We begin with the raw amino-acid sequence, 911 residues long: Translation initiation factor IF-2 (911 aa).

Basic and acidic residues-rich tracts occupy residues 80 to 94 (LEEQ…EQQL) and 101 to 113 (RPER…RTEV). Disordered stretches follow at residues 80-142 (LEEQ…VSEP), 153-172 (VKSP…DVEG), and 195-309 (SSLG…KMRK). Residues 214-256 (KEQADELKDEFDIKAKEGGKEREAGGESRKPVKKGSEETKKTT) are compositionally biased toward basic and acidic residues. The span at 262–272 (AKKKKGKKKKK) shows a compositional bias: basic residues. The segment covering 273–284 (PEVDEKTIEKNI) has biased composition (basic and acidic residues). Residues 286-300 (STISGMDDTSGSGSS) show a composition bias toward low complexity. The 171-residue stretch at 408-578 (IRPPVVTIMG…LTEAEIRELK (171 aa)) folds into the tr-type G domain. The G1 stretch occupies residues 417–424 (GHVDHGKT). Residue 417 to 424 (GHVDHGKT) coordinates GTP. Positions 442–446 (GITQH) are G2. The segment at 464-467 (DTPG) is G3. GTP-binding positions include 464 to 468 (DTPGH) and 518 to 521 (NKID). The segment at 518-521 (NKID) is G4. The segment at 554-556 (SAK) is G5.

The protein belongs to the TRAFAC class translation factor GTPase superfamily. Classic translation factor GTPase family. IF-2 subfamily.

It localises to the cytoplasm. Its function is as follows. One of the essential components for the initiation of protein synthesis. Protects formylmethionyl-tRNA from spontaneous hydrolysis and promotes its binding to the 30S ribosomal subunits. Also involved in the hydrolysis of GTP during the formation of the 70S ribosomal complex. This Chlorobium phaeobacteroides (strain BS1) protein is Translation initiation factor IF-2.